A 173-amino-acid chain; its full sequence is 16S rRNA aminocarboxypropyltransferase (173 aa).

S-adenosyl-L-methionine contacts are provided by Thr-25, Leu-72, Leu-96, and Ser-115.

This sequence belongs to the TDD superfamily. TSR3 family.

The protein localises to the cytoplasm. It carries out the reaction an N(1)-methylpseudouridine in rRNA + S-adenosyl-L-methionine = N(1)-methyl-N(3)-[(3S)-3-amino-3-carboxypropyl]pseudouridine in rRNA + S-methyl-5'-thioadenosine + H(+). Its function is as follows. Aminocarboxypropyltransferase that catalyzes the aminocarboxypropyl transfer on pseudouridine corresponding to position 914 in M.jannaschii 16S rRNA. It constitutes the last step in biosynthesis of the hypermodified N1-methyl-N3-(3-amino-3-carboxypropyl) pseudouridine (m1acp3-Psi). The polypeptide is 16S rRNA aminocarboxypropyltransferase (Methanococcoides burtonii (strain DSM 6242 / NBRC 107633 / OCM 468 / ACE-M)).